The primary structure comprises 413 residues: 1-deoxy-D-xylulose 5-phosphate reductoisomerase (413 aa).

NADPH-binding residues include Thr-13, Gly-14, Ser-15, Ile-16, Lys-40, Asn-41, and Asn-127. Lys-128 provides a ligand contact to 1-deoxy-D-xylulose 5-phosphate. NADPH is bound at residue Glu-129. A Mn(2+)-binding site is contributed by Asp-153. 4 residues coordinate 1-deoxy-D-xylulose 5-phosphate: Ser-154, Glu-155, Ser-184, and His-207. Glu-155 is a binding site for Mn(2+). Residue Gly-213 participates in NADPH binding. Residues Ser-220, Asn-225, Lys-226, and Glu-229 each contribute to the 1-deoxy-D-xylulose 5-phosphate site. Glu-229 contacts Mn(2+).

This sequence belongs to the DXR family. It depends on Mg(2+) as a cofactor. Requires Mn(2+) as cofactor.

It carries out the reaction 2-C-methyl-D-erythritol 4-phosphate + NADP(+) = 1-deoxy-D-xylulose 5-phosphate + NADPH + H(+). The protein operates within isoprenoid biosynthesis; isopentenyl diphosphate biosynthesis via DXP pathway; isopentenyl diphosphate from 1-deoxy-D-xylulose 5-phosphate: step 1/6. Catalyzes the NADPH-dependent rearrangement and reduction of 1-deoxy-D-xylulose-5-phosphate (DXP) to 2-C-methyl-D-erythritol 4-phosphate (MEP). The sequence is that of 1-deoxy-D-xylulose 5-phosphate reductoisomerase from Nitrosomonas eutropha (strain DSM 101675 / C91 / Nm57).